We begin with the raw amino-acid sequence, 518 residues long: Putative beta-xylosidase (518 aa).

The Proton acceptor role is filled by Asp47. Glu203 acts as the Proton donor in catalysis.

This sequence belongs to the glycosyl hydrolase 43 family.

The catalysed reaction is Hydrolysis of (1-&gt;4)-beta-D-xylans, to remove successive D-xylose residues from the non-reducing termini.. This is Putative beta-xylosidase from Xylanibacter ruminicola (Prevotella ruminicola).